A 435-amino-acid chain; its full sequence is Trigger factor (435 aa).

Residues 183–263 enclose the PPIase FKBP-type domain; the sequence is GDFINVDVTI…VKTIWQGNMP (81 aa).

It belongs to the FKBP-type PPIase family. Tig subfamily.

The protein localises to the cytoplasm. It carries out the reaction [protein]-peptidylproline (omega=180) = [protein]-peptidylproline (omega=0). In terms of biological role, involved in protein export. Acts as a chaperone by maintaining the newly synthesized protein in an open conformation. Functions as a peptidyl-prolyl cis-trans isomerase. This Protochlamydia amoebophila (strain UWE25) protein is Trigger factor.